The primary structure comprises 841 residues: DNA ligase (841 aa).

NAD(+) contacts are provided by residues 33–37, 82–83, and E114; these read DAQYD and SL. K116 serves as the catalytic N6-AMP-lysine intermediate. R137, E174, K300, and K324 together coordinate NAD(+). Zn(2+) contacts are provided by C418, C421, C436, and C442. Residues 758–841 form the BRCT domain; the sequence is EKTGPLDGQT…AFLGEHGQQR (84 aa).

Belongs to the NAD-dependent DNA ligase family. LigA subfamily. Mg(2+) is required as a cofactor. It depends on Mn(2+) as a cofactor.

It carries out the reaction NAD(+) + (deoxyribonucleotide)n-3'-hydroxyl + 5'-phospho-(deoxyribonucleotide)m = (deoxyribonucleotide)n+m + AMP + beta-nicotinamide D-nucleotide.. In terms of biological role, DNA ligase that catalyzes the formation of phosphodiester linkages between 5'-phosphoryl and 3'-hydroxyl groups in double-stranded DNA using NAD as a coenzyme and as the energy source for the reaction. It is essential for DNA replication and repair of damaged DNA. This chain is DNA ligase, found in Xanthomonas oryzae pv. oryzae (strain MAFF 311018).